The primary structure comprises 927 residues: DNA mismatch repair protein MutS (927 aa).

646 to 653 (GPNMAGKS) contacts ATP. The interval 904 to 927 (SAQPGSAEQGESPDKHDEGKNSRG) is disordered. Residues 915-927 (SPDKHDEGKNSRG) are compositionally biased toward basic and acidic residues.

This sequence belongs to the DNA mismatch repair MutS family.

Functionally, this protein is involved in the repair of mismatches in DNA. It is possible that it carries out the mismatch recognition step. This protein has a weak ATPase activity. The sequence is that of DNA mismatch repair protein MutS from Desulfovibrio desulfuricans (strain ATCC 27774 / DSM 6949 / MB).